The primary structure comprises 264 residues: Agamous-like MADS-box protein AGL61 (264 aa).

Residues 62–122 (IGRQKIPMVK…KKPFSFGHPS (61 aa)) enclose the MADS-box domain.

In terms of assembly, interacts with PHE1/AGL37, PHE2/AGL38, AGL80 and AGL86. Forms a heterodimer with AGL80. As to expression, expressed exclusively in the central cell of the female gametophyte and in early endosperm.

It is found in the nucleus. In terms of biological role, probable transcription factor. Controls central cell differentiation during female gametophyte development. The sequence is that of Agamous-like MADS-box protein AGL61 (AGL61) from Arabidopsis thaliana (Mouse-ear cress).